A 279-amino-acid polypeptide reads, in one-letter code: B3 domain-containing protein Os05g0481400 (279 aa).

Residues 45–68 (ARLQKSTRASPKPRKKFEVGATEV) are disordered. Residues 139-230 (FVKTMVRSHV…RFKIYIIKAV (92 aa)) constitute a DNA-binding region (TF-B3). Composition is skewed to acidic residues over residues 233–244 (DANESEPADEEA) and 252–262 (TEDAAEQDDSP). The segment at 233-279 (DANESEPADEEAIGDKDTSTEDAAEQDDSPNAEPLKGTKRRKLRGRR) is disordered. Positions 269-279 (GTKRRKLRGRR) are enriched in basic residues.

Its subcellular location is the nucleus. The sequence is that of B3 domain-containing protein Os05g0481400 from Oryza sativa subsp. japonica (Rice).